A 229-amino-acid chain; its full sequence is Large ribosomal subunit protein bL25 (229 aa).

Disordered stretches follow at residues 1–21 and 182–229; these read MDII…ASSR and NAPE…KDKK. The segment covering 195–222 has biased composition (low complexity); the sequence is PAAGAPAAGAAAAPAAGAAAPAKGAAPA.

It belongs to the bacterial ribosomal protein bL25 family. CTC subfamily. As to quaternary structure, part of the 50S ribosomal subunit; part of the 5S rRNA/L5/L18/L25 subcomplex. Contacts the 5S rRNA. Binds to the 5S rRNA independently of L5 and L18.

Its function is as follows. This is one of the proteins that binds to the 5S RNA in the ribosome where it forms part of the central protuberance. This Sorangium cellulosum (strain So ce56) (Polyangium cellulosum (strain So ce56)) protein is Large ribosomal subunit protein bL25.